The chain runs to 299 residues: MTKIKIVVIVGPTAVGKTALGISLAKAFNGEIISGDSQQVYRQLDVGTAKATQEEQAAAVHHLIDIREVTESYSAYEFVQDAQKAISDIVSRGKLPIIVGGTGLYLQSLLEGYHLGGQVDQEAVKAYRQELDQLSDQEVYELLQVKSITIKQLNRRRAIRALELSQFADDLENAETAYEPLIIGLNDDRQVIYDRINQRVDRMLENGLLEEAKWLYEHYPTVQASRGIGYKELFPYFVGEMTLAEASDQLKQNTRRFAKRQLTWFRNRMAVGFTAITAPDYPQVVHDRVRDFLGQKEKS.

Position 11 to 18 (11 to 18 (GPTAVGKT)) interacts with ATP. A substrate-binding site is contributed by 13 to 18 (TAVGKT). Positions 36–39 (DSQQ) are interaction with substrate tRNA.

It belongs to the IPP transferase family. As to quaternary structure, monomer. Mg(2+) serves as cofactor.

It carries out the reaction adenosine(37) in tRNA + dimethylallyl diphosphate = N(6)-dimethylallyladenosine(37) in tRNA + diphosphate. Its function is as follows. Catalyzes the transfer of a dimethylallyl group onto the adenine at position 37 in tRNAs that read codons beginning with uridine, leading to the formation of N6-(dimethylallyl)adenosine (i(6)A). In Streptococcus pyogenes serotype M4 (strain MGAS10750), this protein is tRNA dimethylallyltransferase.